A 416-amino-acid polypeptide reads, in one-letter code: MAIQAPKGTKDLLPMDSYKWHYIEDKLKKLAAEYALKEIRTPAFEHTELFERGVGETTDVVQKEMYTFKDKGDRSITLKPEGTAPAARAFIENGLFNEALPIKMFYFTPVFRYENVQKGRLREHHQFGVEVFGSTEASVDAELIGLAMRAFKEFRIDNLELNINNIGCPECRKKYNDALREYFRESYDELCDTCKTRFERNPMRLLDCKNKKCKEIGKDAPVILDYVCDDCSNHFENLKTYLDSLNIKYKVNPYIVRGLDYYTKTVFEIINNDITVCGGGRYNGLIEQIGGKPTPAVGFGMGIERLILTLMENNIEIPKPKEMDIFIGSMGDNGKIEAFKLVNALRTKGLKAECDHMNKSVKAQMKYANKIDASYSMIIGDTEIEEKKANLKRMEDGQQFEVSLNNLDEIASMILK.

Belongs to the class-II aminoacyl-tRNA synthetase family. Homodimer.

It is found in the cytoplasm. It catalyses the reaction tRNA(His) + L-histidine + ATP = L-histidyl-tRNA(His) + AMP + diphosphate + H(+). The sequence is that of Histidine--tRNA ligase from Clostridium novyi (strain NT).